Reading from the N-terminus, the 310-residue chain is MSLRVTFLGTGGAVPTTERAPSALFVNREGDRLLFDCGEGTQRGMMRFGTGFGIDHLFVSHLHGDHVLGIPGLVQTLGFNDRAEPLTIHCPPGTEDDLHDLVHAVGHDPAFQIRIESVAPGEVALDADGYEVRAFETVHRTKSQGYVLEEDDRPGRFDRPKAEELGVPVGPKFGRLHEGEPVEAEDGSIVEPDQVVGPPRPGRKFVYTADTRPREGTVAVAEDADLLVHDATFADDMEDRARDTAHSTGREAGSVAERAGAKRLALVHISSRYAADASPIRREAREAFDGECLLPDDGDLIEVPFPDADE.

Zn(2+) is bound by residues His61, His63, Asp65, His66, and His139. Asp65 (proton acceptor) is an active-site residue. The segment at Glu150–Arg175 is disordered. Basic and acidic residues predominate over residues Arg153–Glu164. 2 residues coordinate Zn(2+): Asp210 and His268.

Belongs to the RNase Z family. Homodimer. Zn(2+) is required as a cofactor.

It catalyses the reaction Endonucleolytic cleavage of RNA, removing extra 3' nucleotides from tRNA precursor, generating 3' termini of tRNAs. A 3'-hydroxy group is left at the tRNA terminus and a 5'-phosphoryl group is left at the trailer molecule.. In terms of biological role, zinc phosphodiesterase, which displays some tRNA 3'-processing endonuclease activity. Probably involved in tRNA maturation, by removing a 3'-trailer from precursor tRNA. The chain is Ribonuclease Z from Halorubrum lacusprofundi (strain ATCC 49239 / DSM 5036 / JCM 8891 / ACAM 34).